We begin with the raw amino-acid sequence, 213 residues long: Orotate phosphoribosyltransferase (213 aa).

Lysine 26 provides a ligand contact to 5-phospho-alpha-D-ribose 1-diphosphate. 34 to 35 (FF) serves as a coordination point for orotate. 5-phospho-alpha-D-ribose 1-diphosphate is bound by residues 72 to 73 (YK), arginine 99, lysine 100, lysine 103, histidine 105, and 124 to 132 (DDVITAGTA). 2 residues coordinate orotate: threonine 128 and arginine 156.

This sequence belongs to the purine/pyrimidine phosphoribosyltransferase family. PyrE subfamily. As to quaternary structure, homodimer. It depends on Mg(2+) as a cofactor.

It catalyses the reaction orotidine 5'-phosphate + diphosphate = orotate + 5-phospho-alpha-D-ribose 1-diphosphate. The protein operates within pyrimidine metabolism; UMP biosynthesis via de novo pathway; UMP from orotate: step 1/2. Functionally, catalyzes the transfer of a ribosyl phosphate group from 5-phosphoribose 1-diphosphate to orotate, leading to the formation of orotidine monophosphate (OMP). The sequence is that of Orotate phosphoribosyltransferase from Shigella flexneri serotype 5b (strain 8401).